The sequence spans 238 residues: Probable transcriptional regulatory protein CTA_0499 (238 aa).

Residues 1–21 (MAGHSKWANTKHRKERADHKK) are disordered. Positions 9 to 21 (NTKHRKERADHKK) are enriched in basic residues.

This sequence belongs to the TACO1 family.

It is found in the cytoplasm. This is Probable transcriptional regulatory protein CTA_0499 from Chlamydia trachomatis serovar A (strain ATCC VR-571B / DSM 19440 / HAR-13).